The sequence spans 433 residues: Elongation factor 1-alpha (433 aa).

The region spanning Lys5–Arg227 is the tr-type G domain. The interval Gly14 to Ser21 is G1. Gly14–Ser21 contributes to the GTP binding site. A Mg(2+)-binding site is contributed by Ser21. The G2 stretch occupies residues Gly70–Asp74. A G3 region spans residues Asp91–Gly94. GTP-binding positions include Asp91–His95 and Asn153–Asp156. The interval Asn153–Asp156 is G4. A G5 region spans residues Ser192–Trp194.

Belongs to the TRAFAC class translation factor GTPase superfamily. Classic translation factor GTPase family. EF-Tu/EF-1A subfamily.

It is found in the cytoplasm. The enzyme catalyses GTP + H2O = GDP + phosphate + H(+). GTP hydrolase that promotes the GTP-dependent binding of aminoacyl-tRNA to the A-site of ribosomes during protein biosynthesis. This is Elongation factor 1-alpha from Thermofilum pendens (strain DSM 2475 / Hrk 5).